The chain runs to 511 residues: DEP domain-containing protein 7 (511 aa).

One can recognise a DEP domain in the interval 46-136 (LQTQVEVKKR…SSCSLYRFTT (91 aa)).

It belongs to the DEPDC7 family. As to expression, expressed in liver.

This Homo sapiens (Human) protein is DEP domain-containing protein 7 (DEPDC7).